Reading from the N-terminus, the 43-residue chain is Alpha-1-antiproteinase 4 (43 aa).

This sequence belongs to the serpin family. Post-translationally, N-glycosylated with carbohydrates having biantennary side chains. In terms of tissue distribution, plasma.

The protein resides in the secreted. This chain is Alpha-1-antiproteinase 4, found in Equus caballus (Horse).